The chain runs to 261 residues: Hemin import ATP-binding protein HmuV (261 aa).

Positions isoleucine 8–glutamate 243 constitute an ABC transporter domain. ATP is bound at residue glycine 40–serine 47.

This sequence belongs to the ABC transporter superfamily. Heme (hemin) importer (TC 3.A.1.14.5) family. As to quaternary structure, the complex is composed of two ATP-binding proteins (HmuV), two transmembrane proteins (HmuU) and a solute-binding protein (HmuT).

It is found in the cell membrane. Part of the ABC transporter complex HmuTUV involved in hemin import. Responsible for energy coupling to the transport system. This Deinococcus radiodurans (strain ATCC 13939 / DSM 20539 / JCM 16871 / CCUG 27074 / LMG 4051 / NBRC 15346 / NCIMB 9279 / VKM B-1422 / R1) protein is Hemin import ATP-binding protein HmuV.